The primary structure comprises 568 residues: U6 small nuclear RNA (adenine-(43)-N(6))-methyltransferase (568 aa).

Residues 1-20 (MSEIDTNDIKKEMDNKNYRD) form a disordered region. Positions 7 to 20 (NDIKKEMDNKNYRD) are enriched in basic and acidic residues. S-adenosyl-L-methionine contacts are provided by Arg-117, Gly-151, Asp-175, and Asn-250. Disordered regions lie at residues 363–383 (KENN…INNN), 403–431 (NLDS…NNNN), and 503–538 (DPKI…NKNN). Low complexity-rich tracts occupy residues 365-383 (NNNI…INNN), 409-431 (NNNN…NNNN), and 507-538 (NNNN…NKNN).

It belongs to the methyltransferase superfamily. METTL16/RlmF family.

The catalysed reaction is adenosine in U6 snRNA + S-adenosyl-L-methionine = N(6)-methyladenosine in U6 snRNA + S-adenosyl-L-homocysteine + H(+). RNA N6-methyltransferase that mediates N6-methylation of adenine of U6 small nuclear RNA (U6 snRNA). The chain is U6 small nuclear RNA (adenine-(43)-N(6))-methyltransferase from Dictyostelium discoideum (Social amoeba).